Here is a 142-residue protein sequence, read N- to C-terminus: Coactosin-like protein (142 aa).

Ala-2 is subject to N-acetylalanine. The ADF-H domain maps to Ala-2–Lys-130. Residues Thr-66–Lys-75 form a flexible and important for F-actin binding region. Lys-102 carries the post-translational modification N6-acetyllysine. Ser-141 is subject to Phosphoserine.

Belongs to the actin-binding proteins ADF family. Coactosin subfamily. In terms of assembly, interacts with 5-lipoxygenase (ALOX5/5LO) in a calcium-independent manner. Binds to F-actin with a stoichiometry of 1:2.

It is found in the cytoplasm. The protein resides in the cytoskeleton. The protein localises to the nucleus. Functionally, binds to F-actin in a calcium-independent manner. Has no direct effect on actin depolymerization. Acts as a chaperone for ALOX5 (5LO), influencing both its stability and activity in leukotrienes synthesis. This is Coactosin-like protein (Cotl1) from Mus musculus (Mouse).